A 305-amino-acid chain; its full sequence is Probable G-protein coupled receptor 141 (305 aa).

Topologically, residues 1-22 (MPGHNTSRNSSCDPIVTPHLIS) are extracellular. Residues Asn5 and Asn9 are each glycosylated (N-linked (GlcNAc...) asparagine). A helical membrane pass occupies residues 23 to 43 (LYFIVLIGGLVGVISILFLLV). Residues 44–50 (KMNTRSV) lie on the Cytoplasmic side of the membrane. Residues 51–71 (TTMAVINLVVVHSVFLLTVPF) traverse the membrane as a helical segment. Over 72-89 (RLTYLIKKTWMFGLPFCK) the chain is Extracellular. Residues 90–110 (FVSAMLHIHMYLTFLFYVVIL) traverse the membrane as a helical segment. Topologically, residues 111–131 (VTRYLIFFKCKDKVEFYRKLH) are cytoplasmic. Residues 132 to 152 (AVAASAGMWTLVIVIVVPLVV) traverse the membrane as a helical segment. At 153-183 (SRYGIHEEYNEEHCFKFHKELAYTYVKIINY) the chain is on the extracellular side. The chain crosses the membrane as a helical span at residues 184–204 (MIVIFVIAVAVILLVFQVFII). The Cytoplasmic portion of the chain corresponds to 205-227 (MLMVQKLRHSLLSHQEFWAQLKN). Residues 228–248 (LFFIGVILVCFLPYQFFRIYY) traverse the membrane as a helical segment. Over 249-267 (LNVVTHSNACNSKVAFYNE) the chain is Extracellular. Residues 268-288 (IFLSVTAISCYDLLLFVFGGS) form a helical membrane-spanning segment. The Cytoplasmic segment spans residues 289–305 (HWFKQKIIGLWNCVLCR).

The protein belongs to the G-protein coupled receptor 1 family.

The protein resides in the cell membrane. In terms of biological role, orphan receptor. This is Probable G-protein coupled receptor 141 (GPR141) from Homo sapiens (Human).